The primary structure comprises 175 residues: Bifunctional protein PyrR (175 aa).

Residues 40–41 (TR), 102–110 (DDVLYTGRT), Arg-135, and Val-159 contribute to the substrate site. Positions 98–110 (VVIIDDVLYTGRT) match the PRPP-binding motif.

This sequence belongs to the purine/pyrimidine phosphoribosyltransferase family. PyrR subfamily. In terms of assembly, homodimer and homohexamer; in equilibrium.

The catalysed reaction is UMP + diphosphate = 5-phospho-alpha-D-ribose 1-diphosphate + uracil. Regulates transcriptional attenuation of the pyrimidine nucleotide (pyr) operon by binding in a uridine-dependent manner to specific sites on pyr mRNA. This disrupts an antiterminator hairpin in the RNA and favors formation of a downstream transcription terminator, leading to a reduced expression of downstream genes. Its function is as follows. Also displays a weak uracil phosphoribosyltransferase activity which is not physiologically significant. This is Bifunctional protein PyrR from Staphylococcus epidermidis (strain ATCC 12228 / FDA PCI 1200).